We begin with the raw amino-acid sequence, 395 residues long: Chaperone protein DnaJ 1 (395 aa).

The J domain occupies 10–75 (DFYQELGVSS…AKRKEYDETR (66 aa)). The CR-type zinc finger occupies 164 to 242 (GVAMPLRLTS…CKGTGVTTRT (79 aa)). Zn(2+) is bound by residues Cys-177, Cys-180, Cys-194, Cys-197, Cys-216, Cys-219, Cys-230, and Cys-233. 4 CXXCXGXG motif repeats span residues 177 to 184 (CTNCHGSG), 194 to 201 (CPTCNGSG), 216 to 223 (CTDCRGSG), and 230 to 237 (CEECKGTG).

This sequence belongs to the DnaJ family. As to quaternary structure, homodimer. Zn(2+) is required as a cofactor.

It localises to the cytoplasm. Functionally, participates actively in the response to hyperosmotic and heat shock by preventing the aggregation of stress-denatured proteins and by disaggregating proteins, also in an autonomous, DnaK-independent fashion. Unfolded proteins bind initially to DnaJ; upon interaction with the DnaJ-bound protein, DnaK hydrolyzes its bound ATP, resulting in the formation of a stable complex. GrpE releases ADP from DnaK; ATP binding to DnaK triggers the release of the substrate protein, thus completing the reaction cycle. Several rounds of ATP-dependent interactions between DnaJ, DnaK and GrpE are required for fully efficient folding. Also involved, together with DnaK and GrpE, in the DNA replication of plasmids through activation of initiation proteins. The chain is Chaperone protein DnaJ 1 from Mycobacterium bovis (strain ATCC BAA-935 / AF2122/97).